A 148-amino-acid polypeptide reads, in one-letter code: uncharacterized protein (148 aa).

To A.tumefaciens Atu0565/AGR_C_992.

This is an uncharacterized protein from Rhizobium meliloti (strain 1021) (Ensifer meliloti).